A 338-amino-acid chain; its full sequence is DNA-directed RNA polymerase subunit alpha (338 aa).

An alpha N-terminal domain (alpha-NTD) region spans residues 1 to 234; the sequence is MIQKNWQELI…DQLEIFVNFE (234 aa). An alpha C-terminal domain (alpha-CTD) region spans residues 250–338; the sequence is FSPALLKKVD…ELAKRFEEHY (89 aa).

It belongs to the RNA polymerase alpha chain family. Homodimer. The RNAP catalytic core consists of 2 alpha, 1 beta, 1 beta' and 1 omega subunit. When a sigma factor is associated with the core the holoenzyme is formed, which can initiate transcription.

It carries out the reaction RNA(n) + a ribonucleoside 5'-triphosphate = RNA(n+1) + diphosphate. In terms of biological role, DNA-dependent RNA polymerase catalyzes the transcription of DNA into RNA using the four ribonucleoside triphosphates as substrates. The protein is DNA-directed RNA polymerase subunit alpha of Xanthobacter autotrophicus (strain ATCC BAA-1158 / Py2).